The sequence spans 457 residues: Cysteine--tRNA ligase (457 aa).

Zn(2+) is bound at residue C29. The short motif at 31–41 (PTVYDNPHIGN) is the 'HIGH' region element. Residues C214, H239, and E243 each contribute to the Zn(2+) site. The 'KMSKS' region motif lies at 272–276 (KMSKS). K275 contributes to the ATP binding site.

This sequence belongs to the class-I aminoacyl-tRNA synthetase family. As to quaternary structure, monomer. It depends on Zn(2+) as a cofactor.

Its subcellular location is the cytoplasm. It carries out the reaction tRNA(Cys) + L-cysteine + ATP = L-cysteinyl-tRNA(Cys) + AMP + diphosphate. This Rickettsia prowazekii (strain Madrid E) protein is Cysteine--tRNA ligase (cysS).